We begin with the raw amino-acid sequence, 234 residues long: uncharacterized protein (234 aa).

This is an uncharacterized protein from Methanocaldococcus jannaschii (strain ATCC 43067 / DSM 2661 / JAL-1 / JCM 10045 / NBRC 100440) (Methanococcus jannaschii).